The primary structure comprises 671 residues: Fusexin 1 (671 aa).

At 1–12 (MRAVSDFLKNKW) the chain is on the cytoplasmic side. A helical membrane pass occupies residues 13–33 (VAVPAVALLILSLGFLAQNYI). The Extracellular segment spans residues 34 to 574 (TGSFVSGDQI…DPFCADGPLE (541 aa)). 4 disulfide bridges follow: Cys-145–Cys-180, Cys-409–Cys-452, Cys-480–Cys-500, and Cys-513–Cys-528. Residues 168–173 (GAIADY) form a fusion loop region. A helical transmembrane segment spans residues 575 to 595 (MLSKMFHLVAGTAVAFFTGSL). Topologically, residues 596-628 (GYRAGRWVDGEYQIKGGFDPLKSRSVSRAKRGR) are cytoplasmic. Residues 629–649 (FLIGLIAELVSFLLGFYVILL) traverse the membrane as a helical segment. Residue Val-650 is a topological domain, extracellular. A helical membrane pass occupies residues 651–671 (PIWAQLMVILGYVLFKYYTPF).

This sequence belongs to the HAP2/GCS1 family. Fusexin 1 subfamily. In terms of assembly, homotrimer stabilized by interdomain contacts and numerous Ca(2+) and Na(+) ions.

Its subcellular location is the cell surface. The protein localises to the cell membrane. Its function is as follows. Exhibits fusogenic activity. Mediates cell-cell fusion in mammalian cells (bilateral fusion). The chain is Fusexin 1 from Natrinema altunense (strain JCM 12890 / CGMCC 1.3731 / AJ2).